Here is a 968-residue protein sequence, read N- to C-terminus: Phosphoenolpyruvate carboxylase (968 aa).

A Phosphoserine modification is found at Ser-11. Catalysis depends on residues His-172 and Lys-602.

This sequence belongs to the PEPCase type 1 family. In terms of assembly, homotetramer. It depends on Mg(2+) as a cofactor.

The protein localises to the cytoplasm. The enzyme catalyses oxaloacetate + phosphate = phosphoenolpyruvate + hydrogencarbonate. Its activity is regulated as follows. By light-reversible phosphorylation. Functionally, through the carboxylation of phosphoenolpyruvate (PEP) it forms oxaloacetate, a four-carbon dicarboxylic acid source for the tricarboxylic acid cycle. In Phaseolus vulgaris (Kidney bean), this protein is Phosphoenolpyruvate carboxylase.